The following is a 216-amino-acid chain: Thylakoid lumenal 16.5 kDa protein, chloroplastic (216 aa).

A chloroplast-targeting transit peptide spans 1 to 38 (MAKSLLCSSTLNPFFSTTLSSSKKNQIAYSGNSKNQTS). A thylakoid-targeting transit peptide spans 39–73 (SSLLWKRRELSLGFMSSLVAIGLVSNDRRRHDANA).

Its subcellular location is the plastid. The protein localises to the chloroplast thylakoid lumen. The protein is Thylakoid lumenal 16.5 kDa protein, chloroplastic of Arabidopsis thaliana (Mouse-ear cress).